A 142-amino-acid chain; its full sequence is uncharacterized protein (142 aa).

2 consecutive transmembrane segments (helical) span residues valine 75–alanine 97 and leucine 107–tyrosine 124.

It is found in the cell membrane. This is an uncharacterized protein from Archaeoglobus fulgidus (strain ATCC 49558 / DSM 4304 / JCM 9628 / NBRC 100126 / VC-16).